We begin with the raw amino-acid sequence, 530 residues long: Histone-arginine methyltransferase CARMER (530 aa).

Residues Ala-141 to His-450 enclose the SAM-dependent MTase PRMT-type domain. S-adenosyl-L-methionine-binding residues include Gln-154, Arg-163, Gly-187, Glu-209, Glu-238, and Thr-266. Residue Arg-501 is modified to Asymmetric dimethylarginine; by autocatalysis.

The protein belongs to the class I-like SAM-binding methyltransferase superfamily. Protein arginine N-methyltransferase family. As to quaternary structure, homodimer. The dimethylated protein is the major form.

The protein resides in the cytoplasm. The protein localises to the nucleus. The catalysed reaction is L-arginyl-[protein] + 2 S-adenosyl-L-methionine = N(omega),N(omega)-dimethyl-L-arginyl-[protein] + 2 S-adenosyl-L-homocysteine + 2 H(+). Its function is as follows. Methylates (mono- and asymmetric dimethylation) the guanidino nitrogens of arginyl residues in proteins. May methylate histone H3 at 'Arg-17' and activate transcription via chromatin remodeling. The polypeptide is Histone-arginine methyltransferase CARMER (Art4) (Drosophila simulans (Fruit fly)).